We begin with the raw amino-acid sequence, 32 residues long: Cytochrome b6-f complex subunit 7 (32 aa).

Residues 5-25 (IFGTAAIFWVLIPIGLVGGAL) form a helical membrane-spanning segment.

This sequence belongs to the PetM family. In terms of assembly, the 4 large subunits of the cytochrome b6-f complex are cytochrome b6, subunit IV (17 kDa polypeptide, PetD), cytochrome f and the Rieske protein, while the 4 small subunits are PetG, PetL, PetM and PetN. The complex functions as a dimer.

The protein resides in the cellular thylakoid membrane. Its function is as follows. Component of the cytochrome b6-f complex, which mediates electron transfer between photosystem II (PSII) and photosystem I (PSI), cyclic electron flow around PSI, and state transitions. In Synechococcus sp. (strain CC9902), this protein is Cytochrome b6-f complex subunit 7.